We begin with the raw amino-acid sequence, 1127 residues long: Testis-expressed protein 2 (1127 aa).

2 disordered regions span residues 1–27 (MTSL…HVQR) and 133–279 (AVSP…SFFK). Residues 133–187 (AVSPGSSSSGPLASSPSVSSLSEQKTSSSSPLSSPSKSPILSSSASTSTLSSAKP) show a composition bias toward low complexity. At Ser196 the chain carries Phosphoserine. Residues 249–275 (QFTQPRNTGGDSKTAPSSPLTSPSDTR) are compositionally biased toward polar residues. Thr262 carries the post-translational modification Phosphothreonine. Phosphoserine is present on residues Ser265, Ser266, Ser270, and Ser295. Residue Asn330 is glycosylated (N-linked (GlcNAc...) asparagine). The interval 348–386 (EEECDSEGDGYGSDSNIPRSDHPKSTGEPTREIELKSSQ) is disordered. Positions 366–382 (RSDHPKSTGEPTREIEL) are enriched in basic and acidic residues. The next 2 helical transmembrane spans lie at 475–495 (TLGF…PHYV) and 497–517 (GLFL…WFFT). Disordered regions lie at residues 648 to 685 (KAQT…QRDQ), 715 to 764 (KKSS…QKEL), 786 to 816 (QESR…PPSE), and 947 to 980 (DEES…GYVG). Over residues 650-670 (QTDKETSEEKPPAEGSEDPKK) the composition is skewed to basic and acidic residues. Phosphoserine is present on residues Ser732, Ser738, Ser744, Ser748, Ser751, Ser798, and Ser815. Residues 735–750 (NSPSGHLTHSRSSSKG) are compositionally biased toward polar residues. Over residues 787–804 (ESRSPQRSPLQSAESSPT) the composition is skewed to polar residues. In terms of domain architecture, SMP-LTD spans 816–1101 (EEEEQEAWVN…MPNMDDVYIT (286 aa)). A compositionally biased stretch (acidic residues) spans 947-962 (DEESSSAGSSEEDDAP).

It is found in the endoplasmic reticulum membrane. The protein resides in the nucleus membrane. In terms of biological role, during endoplasmic reticulum (ER) stress or when cellular ceramide levels increase, may induce contacts between the ER and medial-Golgi complex to facilitate non-vesicular transport of ceramides from the ER to the Golgi complex where they are converted to complex sphingolipids, preventing toxic ceramide accumulation. The sequence is that of Testis-expressed protein 2 (TEX2) from Homo sapiens (Human).